The primary structure comprises 151 residues: Large ribosomal subunit protein bL17 (151 aa).

The protein belongs to the bacterial ribosomal protein bL17 family. Part of the 50S ribosomal subunit. Contacts protein L32.

This Chlorobium limicola (strain DSM 245 / NBRC 103803 / 6330) protein is Large ribosomal subunit protein bL17.